We begin with the raw amino-acid sequence, 491 residues long: Cadherin-3 (491 aa).

3 consecutive Cadherin domains span residues 1–102, 103–208, and 209–314; these read ENTV…PPVF, VPPS…DHGP, and VPEP…DPWT. The Extracellular segment spans residues 1 to 316; that stretch reads ENTVSHEVQR…VTCRDPWTWG (316 aa). N-linked (GlcNAc...) asparagine glycosylation occurs at Asn228. The helical transmembrane segment at 317-339 threads the bilayer; that stretch reads FLLPILGAALALLLLLLVLLFLV. Topologically, residues 340–491 are cytoplasmic; that stretch reads RKKRKIKEPL…ADMYGGGQDD (152 aa).

Interacts with CDCP1 and CTNNB1.

The protein resides in the cell membrane. Functionally, cadherins are calcium-dependent cell adhesion proteins. They preferentially interact with themselves in a homophilic manner in connecting cells; cadherins may thus contribute to the sorting of heterogeneous cell types. The polypeptide is Cadherin-3 (CDH3) (Bos taurus (Bovine)).